Consider the following 191-residue polypeptide: Probable DNA replication complex GINS protein PSF1 (191 aa).

It belongs to the GINS1/PSF1 family. In terms of assembly, component of the GINS complex which is a heterotetramer of gins1, gins2, gins3 and gins4.

It localises to the nucleus. In terms of biological role, the GINS complex plays an essential role in the initiation of DNA replication. The protein is Probable DNA replication complex GINS protein PSF1 (gins1) of Dictyostelium discoideum (Social amoeba).